The chain runs to 215 residues: Ras-related protein Rab-14 (215 aa).

The residue at position 2 (Ala2) is an N-acetylalanine. The GTP site is built by Gly21, Val22, Gly23, Lys24, Ser25, Cys26, Ala38, Asp39, Cys40, His42, and Thr43. Ser25 provides a ligand contact to Mg(2+). The Switch 1 motif lies at 42–47 (HTIGVE). Mg(2+)-binding residues include Thr43 and Asp66. The short motif at 68–77 (AGQERFRAVT) is the Switch 2 element. Positions 69, 124, 125, 127, 155, and 156 each coordinate GTP. Positions 188-215 (SGVQHKPSAPQGGRLTSEPQPQREGCGC) are disordered. S-geranylgeranyl cysteine attachment occurs at residues Cys213 and Cys215. Cys215 is subject to Cysteine methyl ester.

Belongs to the small GTPase superfamily. Rab family. In terms of assembly, interacts with ZFYVE20. Interacts with KIF16B. Interacts (GTP-bound form) with RUFY1; the interaction recruits RUFY1 onto endosomal membranes. Interacts (GTP-bound form) with RAB11FIP1 (via its C-terminus); the interactions doesn't mediate RAB11FIP1 rectruitment to membranes. Interacts with RAB11FIP2. Mg(2+) is required as a cofactor.

It is found in the recycling endosome. It localises to the early endosome membrane. The protein resides in the golgi apparatus membrane. The protein localises to the golgi apparatus. Its subcellular location is the trans-Golgi network membrane. It is found in the cytoplasmic vesicle. It localises to the phagosome. The enzyme catalyses GTP + H2O = GDP + phosphate + H(+). Its activity is regulated as follows. Regulated by guanine nucleotide exchange factors (GEFs) including DENND6A and DENND6B which promote the exchange of bound GDP for free GTP. Regulated by GTPase activating proteins (GAPs) which increase the GTP hydrolysis activity. Inhibited by GDP dissociation inhibitors (GDIs) which prevent Rab-GDP dissociation. The small GTPases Rab are key regulators of intracellular membrane trafficking, from the formation of transport vesicles to their fusion with membranes. Rabs cycle between an inactive GDP-bound form and an active GTP-bound form that is able to recruit to membranes different set of downstream effectors directly responsible for vesicle formation, movement, tethering and fusion. Involved in membrane trafficking between the Golgi complex and endosomes during early embryonic development. Regulates the Golgi to endosome transport of FGFR-containing vesicles during early development, a key process for developing basement membrane and epiblast and primitive endoderm lineages during early postimplantation development. May act by modulating the kinesin KIF16B-cargo association to endosomes. Regulates, together with its guanine nucleotide exchange factor DENND6A, the specific endocytic transport of ADAM10, N-cadherin/CDH2 shedding and cell-cell adhesion. Mediates endosomal tethering and fusion through the interaction with RUFY1 and RAB4B. Interaction with RAB11FIP1 may function in the process of neurite formation. The chain is Ras-related protein Rab-14 (RAB14) from Sus scrofa (Pig).